Here is an 880-residue protein sequence, read N- to C-terminus: Alanine--tRNA ligase (880 aa).

A disordered region spans residues 414 to 443 (TVDESEFESEMEKQRNRARKARSGGDTEGW). Zn(2+) is bound by residues H566, H570, C668, and H672.

It belongs to the class-II aminoacyl-tRNA synthetase family. Requires Zn(2+) as cofactor.

It localises to the cytoplasm. It carries out the reaction tRNA(Ala) + L-alanine + ATP = L-alanyl-tRNA(Ala) + AMP + diphosphate. Catalyzes the attachment of alanine to tRNA(Ala) in a two-step reaction: alanine is first activated by ATP to form Ala-AMP and then transferred to the acceptor end of tRNA(Ala). Also edits incorrectly charged Ser-tRNA(Ala) and Gly-tRNA(Ala) via its editing domain. This Alkaliphilus metalliredigens (strain QYMF) protein is Alanine--tRNA ligase.